A 211-amino-acid polypeptide reads, in one-letter code: Transcriptional regulatory protein RcsA (211 aa).

The HTH luxR-type domain occupies 135-200 (LDVHPLTLSQ…VIYHVVRLTD (66 aa)). Positions 159-178 (TIQISDKMQIKAKTVSSHKG) form a DNA-binding region, H-T-H motif.

This sequence belongs to the RcsA family.

Component of the Rcs signaling system, which controls transcription of numerous genes. Binds to DNA to regulate expression of genes. In Pantoea stewartii subsp. stewartii (Erwinia stewartii), this protein is Transcriptional regulatory protein RcsA.